A 2256-amino-acid polypeptide reads, in one-letter code: Death-inducer obliterator 1 (2256 aa).

M1 carries the N-acetylmethionine modification. A compositionally biased stretch (basic and acidic residues) spans 1–25; the sequence is MDDKGHLSNEEAPKAIKPTSKEFRK. Positions 1 to 256 are disordered; it reads MDDKGHLSNE…NPREAGKPKP (256 aa). Composition is skewed to polar residues over residues 48–59 and 96–119; these read SEQQPQQHNLSL and EPTS…SSEI. Residues S58 and S112 each carry the phosphoserine modification. Residues 128 to 142 show a composition bias toward basic and acidic residues; the sequence is LGKEHPASSEKAKGG. Residues 143 to 153 show a composition bias toward acidic residues; sequence EEEEDTSDSDS. T148 bears the Phosphothreonine mark. S149 and S151 each carry phosphoserine. Short sequence motifs (nuclear localization signal) lie at residues 162 to 170 and 182 to 190; these read QNRLRRKRE and QNRLRKKRR. Residues 169 to 178 are compositionally biased toward basic and acidic residues; the sequence is REQEPVERSL. Composition is skewed to basic and acidic residues over residues 206–216 and 246–256; these read EQDRPLCKQEP and ENPREAGKPKP. Residues 265–319 form a PHD-type zinc finger; that stretch reads ALYCICRQPHNNRFMICCDRCEEWFHGDCVGISEARGRLLERNGEDYICPNCTIL. Disordered regions lie at residues 481–535, 598–624, 641–668, 778–822, 856–970, 1011–1039, and 1197–1218; these read LASR…DDRR, RPWP…ASKK, ANVP…SQIR, SRTK…PEKS, QVPS…TALS, AKPS…PPEG, and PSSA…QEEL. Residues 495-506 are compositionally biased toward polar residues; that stretch reads ESSTPSWASDHN. The residue at position 522 (S522) is a Phosphoserine. One can recognise a TFIIS central domain in the interval 667–787; the sequence is IRQNIRRSLK…SRTKLLNESK (121 aa). Residues 778 to 788 show a composition bias toward basic and acidic residues; sequence SRTKLLNESKK. The segment covering 797–812 has biased composition (acidic residues); that stretch reads PDMEDSPPVSDSEEQQ. Residues S802 and S806 each carry the phosphoserine modification. 2 stretches are compositionally biased toward basic and acidic residues: residues 875–886 and 921–935; these read SKKEDFKPRHDS and QERK…DSHP. K876 participates in a covalent cross-link: Glycyl lysine isopeptide (Lys-Gly) (interchain with G-Cter in SUMO2). The residue at position 886 (S886) is a Phosphoserine. Over residues 937–962 the composition is skewed to low complexity; that stretch reads PSSLGGLSPSSASGGSGVVTTVTMSG. Residues S1016, S1027, and S1035 each carry the phosphoserine modification. Positions 1202-1215 are enriched in basic and acidic residues; it reads ELDKTDEKRTRLQQ. Position 1239 is a phosphotyrosine (Y1239). The disordered stretch occupies residues 1245–1288; the sequence is DTAATSTTPPGSPPPPPPLPEPPVLKILSSLKPGSTSTVTAPTT. T1252 is subject to Phosphothreonine. Residues 1254 to 1267 show a composition bias toward pro residues; that stretch reads PGSPPPPPPLPEPP. S1256 is subject to Phosphoserine. Residues 1279 to 1288 show a composition bias toward low complexity; the sequence is STSTVTAPTT. Position 1307 is a phosphoserine (S1307). 4 disordered regions span residues 1320 to 1347, 1362 to 1421, 1509 to 1609, and 1630 to 2256; these read KKSF…KGED, FGQF…VAYD, SDAL…EAKE, and QKCE…AAQA. The segment covering 1371–1387 has biased composition (acidic residues); the sequence is LEEEEEDDRPYDPEEEY. S1514 bears the Phosphoserine mark. Residues 1526–1546 show a composition bias toward polar residues; sequence LFSQEQQAPDPSQGAPNTNHN. A compositionally biased stretch (basic and acidic residues) spans 1547–1557; that stretch reads LDSRQSRDPRQ. Residues 1649–1666 are compositionally biased toward low complexity; sequence PTAGDGAARPAPPRRVLL. The segment covering 1667–1679 has biased composition (pro residues); that stretch reads PTPPSTTFPPSFP. The span at 1699-1712 shows a compositional bias: polar residues; the sequence is TFMSQETSLGSSQY. Position 1726 is a phosphoserine (S1726). Pro residues predominate over residues 1783 to 1792; sequence FPGPRGPVPP. An Omega-N-methylarginine modification is found at R1848. Basic and acidic residues predominate over residues 1855–1869; sequence FEDRKDPHGEKREFQ. Asymmetric dimethylarginine is present on residues R1904, R1905, R1988, R1993, R2004, R2019, and R2035. Composition is skewed to basic and acidic residues over residues 2081-2113 and 2123-2246; these read EFRE…KPLD and RQGR…EART.

As to quaternary structure, interacts specifically (via PHD-type zinc finger) with histone H3 that is trimethylated at 'Lys-4' (H3K4me3), histone phosphorylation at 'Thr-3' or 'Thr-6' disrupts this binding and promotes translocation of DIDO1 from chromatin to the mitotic spindle during mitosis. As to expression, ubiquitous. Expressed at intermediate levels.

It localises to the cytoplasm. The protein localises to the nucleus. The protein resides in the cytoskeleton. Its subcellular location is the spindle. Required for early embryonic stem cell development. Putative transcription factor, weakly pro-apoptotic when overexpressed. The sequence is that of Death-inducer obliterator 1 (Dido1) from Mus musculus (Mouse).